A 497-amino-acid polypeptide reads, in one-letter code: Pentatricopeptide repeat-containing protein At2g36240 (497 aa).

PPR repeat units follow at residues 156–186 (LEPIFRSAIDAYCRARKMDYALLAFDTMKRL), 192–226 (NVGVYNTVVNGYVKSGDMDKALRFYQRMGKERAKP), 227–261 (DVCTFNILINGYCRSSKFDLALDLFREMKEKGCEP), 262–296 (NVVSFNTLIRGFLSSGKIEEGVKMAYEMIELGCRF), 297–331 (SEATCEILVDGLCREGRVDDACGLVLDLLNKRVLP), 332–366 (SEFDYGSLVEKLCGENKAVRAMEMMEELWKKGQTP), 367–401 (CFIACTTLVEGLRKSGRTEKASGFMEKMMNAGILP), 402–436 (DSVTFNLLLRDLCSSDHSTDANRLRLLASSKGYEP), and 437–471 (DETTYHVLVSGFTKEGRRKEGEVLVNEMLDKDMLP).

It belongs to the PPR family. P subfamily.

This chain is Pentatricopeptide repeat-containing protein At2g36240, found in Arabidopsis thaliana (Mouse-ear cress).